The primary structure comprises 624 residues: ATP-dependent zinc metalloprotease FtsH (624 aa).

The Cytoplasmic segment spans residues 1-7 (MPRAPFS). The helical transmembrane segment at 8–28 (LLALVLGLAFLAWAFSLAGTV) threads the bilayer. Residues 29-103 (GAPSGTVNYT…VRVEPPQGQN (75 aa)) are Periplasmic-facing. A helical transmembrane segment spans residues 104-124 (ALGFLWPLLLVGLLIGALYYF). Residues 125–624 (SRNGRAGPSD…VKPGGALGGA (500 aa)) lie on the Cytoplasmic side of the membrane. Residues alanine 159, 199 to 203 (GVGKT), and histidine 204 contribute to the ATP site. Position 418 (histidine 418) interacts with Zn(2+). The active site involves glutamate 419. Zn(2+)-binding residues include histidine 422 and aspartate 493. Residues 595–624 (PLEAPEEAREEREPPRVVPKVKPGGALGGA) form a disordered region. Residues 600-609 (EEAREEREPP) show a composition bias toward basic and acidic residues.

The protein in the central section; belongs to the AAA ATPase family. It in the C-terminal section; belongs to the peptidase M41 family. In terms of assembly, the isolated soluble domain (residues 126-624) forms a stable hexamer in which the AAA+ domains (residues 126-400) are alternatively open or closed. Zn(2+) serves as cofactor.

It localises to the cell inner membrane. With respect to regulation, the proteolytic activity is dependent on ATP, both the ATPase and protease activities are inhibited by ADP. In terms of biological role, acts as a processive, ATP-dependent zinc metallopeptidase for both cytoplasmic and membrane proteins. Plays a role in the quality control of integral membrane proteins. Degrades preferentially unfolded substrates in a processive, ATP-dependent manner, usually after hydrophobic residues. The chain is ATP-dependent zinc metalloprotease FtsH from Thermus thermophilus (strain ATCC 27634 / DSM 579 / HB8).